The chain runs to 232 residues: C4-dicarboxylate TRAP transporter small permease protein DctQ (232 aa).

4 helical membrane-spanning segments follow: residues 30 to 50, 58 to 78, 103 to 123, and 167 to 187; these read EFLI…NVIM, ILWA…VGAS, LYAL…LIGS, and FIPY…FLQI.

The protein belongs to the TRAP transporter small permease family. In terms of assembly, the complex comprises the extracytoplasmic solute receptor protein DctP, and the two transmembrane proteins DctQ and DctM.

The protein localises to the cell inner membrane. In terms of biological role, part of the tripartite ATP-independent periplasmic (TRAP) transport system DctPQM involved in C4-dicarboxylates uptake. The sequence is that of C4-dicarboxylate TRAP transporter small permease protein DctQ from Vibrio cholerae serotype O1 (strain ATCC 39315 / El Tor Inaba N16961).